The following is a 410-amino-acid chain: Aspartic proteinase Asp1 (410 aa).

Positions 1–23 (MTARLALLASLLLLLQLVPPSSA) are cleaved as a signal peptide. Positions 24-46 (VVLELHGNVYPIGHFFVTMNIGD) are cleaved as a propeptide — removed in mature form. In terms of domain architecture, Peptidase A1 spans 38-392 (FFVTMNIGDP…DSERSLLGWV (355 aa)). Active-site residues include Asp56 and Asp257.

It belongs to the peptidase A1 family. Expressed in pollen, nucellus, ovary wall, shoot and root meristem, coleoptiles of immature seeds, and somatic embryos.

Its function is as follows. Possesses protease activity in vitro. This chain is Aspartic proteinase Asp1 (ASP1), found in Oryza sativa subsp. indica (Rice).